An 808-amino-acid polypeptide reads, in one-letter code: MSTTSRPGLWALITAAVFALCGAILTVGGAWVAAIGGPLYYVILGLALLATAFLSFRRNPAALYLFAVVVFGTVIWELTVVGLDIWALIPRSDIVIILGIWLLLPFVSRQIGGTRTTVLPLAGAVGVAVLALFASLFTDPHDISGDLPTQIANASPADPDNVPASEWHAYGRTQAGDRWSPLNQINASNVSNLKVAWHIHTKDMMNSNDPGEATNEATPIEFNNTLYMCSLHQKLFAVDGATGNVKWVYDPKLQINPGFQHLTCRGVSFHETPANATDSDGNPAPTDCAKRIILPVNDGRLVEVDADTGKTCSGFGNNGEIDLRVPNQPYTTPGQYEPTSPPVITDKLIIANSAITDNGSVKQASGATQAFDVYTGKRVWVFDASNPDPNQLPDDSHPVFHPNSPNSWIVSSYDRNLNLVYIPMGVGTPDQWGGDRTKDSERFAPGIVALNADTGKLAWFYQTVHHDLWDMDVPSQPSLVDVTQKDGTLVPAIYAPTKTGDIFVLDRRTGKEIVPAPETPVPQGAAPGDHTSPTQPMSQLTLRPKNPLNDSDIWGGTIFDQMFCSIYFHTLRYEGPFTPPSLKGSLIFPGDLGMFEWGGLAVDPQRQVAFANPISLPFVSQLVPRGPGNPLWPEKDAKGTGGETGLQHNYGIPYAVNLHPFLDPVLLPFGIKMPCRTPPWGYVAGIDLKTNKVVWQHRNGTLRDSMYGSSLPIPLPPIKIGVPSLGGPLSTAGNLGFLTASMDYYIRAYNLTTGKVLWQDRLPAGAQATPITYAINGKQYIVTYAGGHNSFPTRMGDDIIAYALPDQK.

Residues 1–33 form the signal peptide; sequence MSTTSRPGLWALITAAVFALCGAILTVGGAWVA. A run of 4 helical transmembrane segments spans residues 35-54, 59-76, 94-108, and 123-138; these read IGGP…TAFL, NPAA…TVIW, IVII…PFVS, and GAVG…SLFT. The Proton acceptor role is filled by aspartate 470. The segment at 514-545 is disordered; the sequence is VPAPETPVPQGAAPGDHTSPTQPMSQLTLRPK. The segment covering 531 to 541 has biased composition (polar residues); sequence TSPTQPMSQLT.

This sequence belongs to the bacterial PQQ dehydrogenase family. Requires pyrroloquinoline quinone as cofactor.

The protein resides in the cell inner membrane. The enzyme catalyses a ubiquinone + D-glucose = D-glucono-1,5-lactone + a ubiquinol. The polypeptide is Quinoprotein glucose dehydrogenase (gdh) (Gluconobacter oxydans (strain 621H) (Gluconobacter suboxydans)).